The sequence spans 287 residues: Putative sugar uptake protein spyM18_2243 (287 aa).

A run of 10 helical transmembrane segments spans residues 4–26 (IFYALIPMFTWGSIGFVSNKIGG), 33–50 (LGMTFGALLFSLAVWLIV), 55–72 (TLQLWLFGILGGFIWSIG), 85–107 (VSVANPLSSGSQLVLGSLIGVLV), 117–134 (FVVGSLALLLLIVGFYFS), 154–171 (FRALTYSTIGYVMYAVLF), 181–200 (SVILPMAVGMVLGAITFMSF), 207–229 (YVIKNSVVGLLWGIGNIFMLLAA), 234–256 (LAIAFSFSQLGAIISIVGGILFL), and 268–285 (VVTGIICFIVGAILLGVV).

This sequence belongs to the GRP transporter (TC 2.A.7.5) family.

It localises to the cell membrane. The sequence is that of Putative sugar uptake protein spyM18_2243 from Streptococcus pyogenes serotype M18 (strain MGAS8232).